The following is a 3176-amino-acid chain: Large tegument protein deneddylase (3176 aa).

The span at 1–12 (MSNGDWGQSQRP) shows a compositional bias: polar residues. The disordered stretch occupies residues 1–28 (MSNGDWGQSQRPRGTGPMRGIRTMDVNA). The interval 1-268 (MSNGDWGQSQ…YEANGSGFDL (268 aa)) is deubiquitination activity. The Peptidase C76 domain occupies 41–258 (LGTASCNQAH…MLEHYGVYDF (218 aa)). Active-site residues include C61, D193, and H195. A disordered region spans residues 319 to 342 (PAARYSPAKTNSPPPSPASAAPAS). 5 consecutive repeat copies span residues 335 to 339 (PASAA), 340 to 344 (PASAA), 345 to 349 (PASAA), 350 to 354 (PASAA), and 355 to 359 (PASAA). Residues 335 to 384 (PASAAPASAAPASAAPASAAPASAAQASVAPASVAPASAAPASAAPDSAA) are 10 X 5 AA approximate repeats of P-A-S-A-A. One copy of the 6; approximate repeat lies at 360-364 (QASVA). The stretch at 365 to 369 (PASVA) is one 7; approximate repeat. 2 tandem repeats follow at residues 370-374 (PASAA) and 375-379 (PASAA). Over residues 376-386 (ASAAPDSAAPA) the composition is skewed to low complexity. Disordered stretches follow at residues 376 to 683 (ASAA…GSGL), 928 to 950 (LLSG…SIYR), 1170 to 1193 (APIS…TPPL), 1435 to 1461 (LMET…RARE), 2610 to 3008 (GLVS…PGAR), and 3023 to 3043 (TYTV…KMPK). Residues 380–384 (PDSAA) form a 10; approximate repeat. Over residues 457–488 (PRPPVPPHRPPSAARLPPPVIPIPHQSPPASP) the composition is skewed to pro residues. Residues 519–546 (AAPSNPEIPLTTPSPSPTAAAAPTATTL) are compositionally biased toward low complexity. Residues 579–636 (APSPLLPQQQPPPSAAPAPSPLLPQQQPPPSAARAPSPLPPQQQPLPSATPAPPPAQQ) show a composition bias toward pro residues. An interaction with inner tegument protein region spans residues 581-611 (SPLLPQQQPPPSAAPAPSPLLPQQQPPPSAA). Over residues 1170-1182 (APISPASPSATPA) the composition is skewed to low complexity. Residues 2619–2630 (SADNTPASSDRL) show a composition bias toward polar residues. Low complexity predominate over residues 2643–2654 (EGSTTAESEASG). Pro residues predominate over residues 2738 to 2747 (QPAPQQPPSS). Polar residues-rich tracts occupy residues 2761-2772 (SPHSTPSTASGS) and 2811-2831 (SAAS…SSQD). Residues 2839–2854 (MQREKKQQGGREEAAE) show a composition bias toward basic and acidic residues. 2 stretches are compositionally biased toward low complexity: residues 2872 to 2886 (APVV…ATPA) and 2901 to 2912 (APALGSGLAAPA).

The protein belongs to the herpesviridae large tegument protein family. As to quaternary structure, interacts with host CUL1 and CUL4A; these interactions inhibit the E3 ligase activity of cullins. Interacts with inner tegument protein. Interacts with capsid vertex specific component CVC2. Interacts with the major capsid protein/MCP. Interacts with host TRIM25 and YWHAZ.

The protein resides in the virion tegument. Its subcellular location is the host cytoplasm. It is found in the host nucleus. It carries out the reaction Thiol-dependent hydrolysis of ester, thioester, amide, peptide and isopeptide bonds formed by the C-terminal Gly of ubiquitin (a 76-residue protein attached to proteins as an intracellular targeting signal).. Functionally, large tegument protein that plays multiple roles in the viral cycle. During viral entry, remains associated with the capsid while most of the tegument is detached and participates in the capsid transport toward the host nucleus. Plays a role in the routing of the capsid at the nuclear pore complex and subsequent uncoating. Within the host nucleus, acts as a deneddylase and promotes the degradation of nuclear CRLs (cullin-RING ubiquitin ligases) and thereby stabilizes nuclear CRL substrates, while cytoplasmic CRLs remain unaffected. These modifications prevent host cell cycle S-phase progression and create a favorable environment allowing efficient viral genome replication. Participates later in the secondary envelopment of capsids. Indeed, plays a linker role for the association of the outer viral tegument to the capsids together with the inner tegument protein. Counteracts host TLR-mediated NF-kappa-B activation through both MYD88 and TICAM1-dependent pathways by interfering with 'Lys-63'- and 'Lys-48'-linked ubiquitination of signaling intermediates such as TRAF6 and IKBKG. Inhibits type I interferon production by forming a tri-molecular complex with host TRIM25 and 14-3-3 thereby promoting TRIM25 autoubiquitination and sequestration of the ligase into inactive protein aggregates. In turn, host RIGI is recruited to the complex but ubiquitination is severely impaired leading to inhibition of the pathway. Also catalyzes the removal of 'Lys-48'- and 'Lys-63'-linked ubiquitin chains on host TBK1 and STING1 suppressing cGAS-STING signaling in addition to the RIGI-MAVS pathway. Inhibits selective autophagy by deubiquitinating host SQSTM1. In turn, decreased SQSTM1 ubiquitination fails to recruit LC3 to SQSTM1-positive aggregates. In the host nucleus, deubiquitinates topoisomerase II subunits TOP2A and TOP2B thereby stabilizing SUMOylated TOP2 which halts the DNA damage response to TOP2-induced double strand DNA breaks and promotes cell survival. The protein is Large tegument protein deneddylase of Homo sapiens (Human).